A 316-amino-acid polypeptide reads, in one-letter code: Leucine-rich repeat-containing protein 73 (316 aa).

LRR repeat units follow at residues 57–78, 86–106, 114–137, 145–166, 174–187, 202–223, and 231–250; these read SLAQ…KQLA, SIQS…ALLN, ALVA…CGLL, GLKE…SRLA, QVRV…PLGD, TLEV…TLLD, and ALRS…QQQI. The segment at 257 to 296 is disordered; that stretch reads GEEEEEVAGGAGDTQEWERGREPAAHQRGSSSWMCPSDPS. Basic and acidic residues predominate over residues 272-281; it reads EWERGREPAA. Residues 286 to 296 are compositionally biased toward low complexity; sequence SSSWMCPSDPS.

In Homo sapiens (Human), this protein is Leucine-rich repeat-containing protein 73 (LRRC73).